We begin with the raw amino-acid sequence, 177 residues long: MAKCKEEVFNWEDEEQEEIIWVSKSEIKRDAEALKKLGEKLVNLTKTNLDKIPLDTGLRDAVELAQRLQKEALRRQIQYIGKLLRAIDPEPIQEALNKIENKHQQQQAKLHKLELLRDELVQKGNSAFTELLIQYPHADRQHLHNLIRSAQKEREQNKPPKSYREIFQYLKDLILED.

It belongs to the DarP family.

The protein localises to the cytoplasm. Functionally, member of a network of 50S ribosomal subunit biogenesis factors which assembles along the 30S-50S interface, preventing incorrect 23S rRNA structures from forming. Promotes peptidyl transferase center (PTC) maturation. The protein is Dual-action ribosomal maturation protein DarP of Histophilus somni (strain 2336) (Haemophilus somnus).